Reading from the N-terminus, the 488-residue chain is Long chain base biosynthesis protein 2a (488 aa).

A helical transmembrane segment spans residues Leu-4–Gln-24. Lys-311 is subject to N6-(pyridoxal phosphate)lysine.

Belongs to the class-II pyridoxal-phosphate-dependent aminotransferase family. In terms of assembly, heterodimer with LCB1. Component of the serine palmitoyltransferase (SPT) complex, composed of LCB1 and LCB2. It depends on pyridoxal 5'-phosphate as a cofactor.

It localises to the endoplasmic reticulum membrane. The enzyme catalyses L-serine + hexadecanoyl-CoA + H(+) = 3-oxosphinganine + CO2 + CoA. It functions in the pathway lipid metabolism; sphingolipid metabolism. Functionally, serine palmitoyltransferase (SPT). The heterodimer formed with LCB1 constitutes the catalytic core. The protein is Long chain base biosynthesis protein 2a of Oryza sativa subsp. japonica (Rice).